The following is a 75-amino-acid chain: Transcription attenuation protein MtrB (75 aa).

This sequence belongs to the MtrB family. In terms of assembly, oligomer of 11 identical subunits arranged in doughnut-like structure.

In terms of biological role, required for transcription attenuation control in the trp operon. This trans-acting factor binds to trinucleotide repeats (GAG or UAG) located in the trp leader transcript causing transcription termination. Binds the leader RNA only in presence of L-tryptophan. The sequence is that of Transcription attenuation protein MtrB (mtrB) from Bacillus subtilis (strain 168).